The sequence spans 193 residues: MFVSRLAASGLLLLALLALSLDGKPVHQSKPGRSPPISPLSAQQWMPEGRPPHPIPPLSVQQWSQGRPRSEVPPVVVQPHESPAGGTTAFREELSPGPEAASGPAAPHRLPKSKGASATSAASRPMRDLRTDGKQERQKWGRMVQPDHHAAPGGGGGGGGGARRMKGLAKKAMGKGCFGHKLDRIGSTSGLGC.

Residues 1–23 form the signal peptide; that stretch reads MFVSRLAASGLLLLALLALSLDG. Positions 24 to 27 are excised as a propeptide; the sequence is KPVH. Positions 25 to 173 are disordered; sequence PVHQSKPGRS…RMKGLAKKAM (149 aa). Residue Gln28 is modified to Pyrrolidone carboxylic acid. 2 consecutive propeptides follow at residues 40–43 and 58–64; these read LSAQ and LSVQQWS. At Gln65 the chain carries Pyrrolidone carboxylic acid. The propeptide occupies 75–169; it reads VVVQPHESPA…GGARRMKGLA (95 aa). A compositionally biased stretch (low complexity) spans 95 to 123; that stretch reads SPGPEAASGPAAPHRLPKSKGASATSAAS. Basic and acidic residues predominate over residues 125 to 150; the sequence is PMRDLRTDGKQERQKWGRMVQPDHHA. Positions 152-162 are enriched in gly residues; that stretch reads PGGGGGGGGGA. The segment covering 163–173 has biased composition (basic residues); it reads RRMKGLAKKAM. The cysteines at positions 177 and 193 are disulfide-linked.

This sequence in the N-terminal section; belongs to the bradykinin-potentiating peptide family. The protein in the C-terminal section; belongs to the natriuretic peptide family. In terms of tissue distribution, expressed by the venom gland.

The protein localises to the secreted. Functionally, bradykinin-potentiating peptide both inhibits the activity of the angiotensin-converting enzyme (ACE) and enhances the action of bradykinin by inhibiting the peptidases that inactivate it. It acts as an indirect hypotensive agent. Neither synthetic Tf1, nor synthetic Tf2 show bradykinin-potentiating effects. Has a vasorelaxant activity in rat aortic strips and a diuretic potency in anesthetized rats. Its function is as follows. Has a vasorelaxant activity in rat aortic strips and a diuretic potency in anesthetized rats. Is as potent as Tf-CNP. In Protobothrops flavoviridis (Habu), this protein is Bradykinin-potentiating and C-type natriuretic peptides.